Here is a 476-residue protein sequence, read N- to C-terminus: RuvB-like 1 (476 aa).

The disordered stretch occupies residues methionine 1 to valine 23. Glycine 89–threonine 96 is an ATP binding site.

Belongs to the RuvB family. Forms homohexameric rings. May form a dodecamer with ruvb-2 made of two stacked hexameric rings. In terms of tissue distribution, expressed in gonadal cells.

Its subcellular location is the cytoplasm. The protein localises to the nucleus. The catalysed reaction is ATP + H2O = ADP + phosphate + H(+). In terms of biological role, possesses single-stranded DNA-stimulated ATPase and ATP dependent DNA helicase (3' to 5') activity suggesting a role in nuclear processes such as recombination and transcription. May participate in several chromatin remodeling complexes that mediate the ATP-dependent exchange of histones and remodel chromatin by shifting nucleosomes. Involvement in these complexes is likely required for transcriptional activation of selected genes and DNA repair in response to DNA damage. Involved in the Ce-Tor signaling pathway whereby it is required for the accumulation and localization of box C/D snoRNP to nucleoli to regulate ribosomal maturation and thus protein synthesis. Antagonizes the transcriptional activity of transcription factor pha-4, to control postembryonic development and adult longevity. Has a role in pharyngeal development. Has a role in gonadal development. This is RuvB-like 1 from Caenorhabditis elegans.